We begin with the raw amino-acid sequence, 585 residues long: Membrane protein insertase YidC (585 aa).

6 helical membrane passes run 5-25, 338-358, 362-382, 432-452, 482-502, and 518-538; these read SVTG…FMSP, FGWD…AFTW, FVSN…LVTY, LGGC…FYVF, IPMY…TVFL, and IMLY…PSGL.

It belongs to the OXA1/ALB3/YidC family. Type 1 subfamily. Interacts with the Sec translocase complex via SecD. Specifically interacts with transmembrane segments of nascent integral membrane proteins during membrane integration.

It is found in the cell inner membrane. Its function is as follows. Required for the insertion and/or proper folding and/or complex formation of integral membrane proteins into the membrane. Involved in integration of membrane proteins that insert both dependently and independently of the Sec translocase complex, as well as at least some lipoproteins. Aids folding of multispanning membrane proteins. This is Membrane protein insertase YidC from Chlorobium luteolum (strain DSM 273 / BCRC 81028 / 2530) (Pelodictyon luteolum).